Reading from the N-terminus, the 159-residue chain is Transmembrane protein 88 (159 aa).

Transmembrane regions (helical) follow at residues 43–63 (LLLL…MLGF) and 88–108 (FTAL…LALA). Residues 137-159 (PQPRQIRASPGSQAVPTSGKVWV) form a disordered region.

This sequence belongs to the TMEM88 family. In terms of assembly, interacts (via C-terminus) with DVL1.

It localises to the cell membrane. Functionally, inhibits the Wnt/beta-catenin signaling pathway. Crucial for heart development and acts downstream of GATA factors in the pre-cardiac mesoderm to specify lineage commitment of cardiomyocyte development. The protein is Transmembrane protein 88 (TMEM88) of Homo sapiens (Human).